The following is a 238-amino-acid chain: Probable transcriptional regulatory protein SAK_1658 (238 aa).

It belongs to the TACO1 family. YeeN subfamily.

The protein resides in the cytoplasm. The chain is Probable transcriptional regulatory protein SAK_1658 from Streptococcus agalactiae serotype Ia (strain ATCC 27591 / A909 / CDC SS700).